The primary structure comprises 164 residues: MIWRRAALAGTRLVWSRSGSAGWLDRAAGAAGAAAAAASGMESNTSSSLENLATAPVNQIQETISDNCVVIFSKTSCSYCTMAKKLFHDMNVNYKVVELDLLEYGNQFQDALYKMTGERTVPRIFVNGTFIGGATDTHRLHKEGKLLPLVHQCYLKKSKRKEFQ.

The N-terminal 19 residues, 1 to 19, are a transit peptide targeting the mitochondrion; the sequence is MIWRRAALAGTRLVWSRSG. Phosphoserine is present on Ser20. One can recognise a Glutaredoxin domain in the interval 57-157; that stretch reads VNQIQETISD…PLVHQCYLKK (101 aa). Cys68 contacts [2Fe-2S] cluster. Glutathione is bound at residue Lys74. Position 77 is an S-glutathionyl cysteine; alternate (Cys77). The cysteines at positions 77 and 80 are disulfide-linked. Residues Gln109 and Val121 each coordinate glutathione. [2Fe-2S] cluster is bound at residue Cys153.

This sequence belongs to the glutaredoxin family. As to quaternary structure, monomer; active form. Homodimer; inactive form. The homodimer is probably linked by 1 2Fe-2S cluster. As to expression, widely expressed. Expressed in brain, heart, skeletal muscle, colon, thymus, spleen, kidney, liver, small intestine, placenta and lung. Not expressed in peripheral blood leukocytes.

It is found in the mitochondrion. The protein resides in the nucleus. Its activity is regulated as follows. The 2Fe-2S present in the homodimer leads to inactivation of the enzyme. The 2Fe-2S may serve as a redox sensor: the presence of one-electron oxidants or reductants leading to the loss of the 2Fe-2S cluster, subsequent monomerization and activation of the enzyme. Unlike other glutaredoxins, it is not inhibited by oxidation of structural Cys residues. Its function is as follows. Glutathione-dependent oxidoreductase that facilitates the maintenance of mitochondrial redox homeostasis upon induction of apoptosis by oxidative stress. Involved in response to hydrogen peroxide and regulation of apoptosis caused by oxidative stress. Acts as a very efficient catalyst of monothiol reactions because of its high affinity for protein glutathione-mixed disulfides. Can receive electrons not only from glutathione (GSH), but also from thioredoxin reductase supporting both monothiol and dithiol reactions. Efficiently catalyzes both glutathionylation and deglutathionylation of mitochondrial complex I, which in turn regulates the superoxide production by the complex. Overexpression decreases the susceptibility to apoptosis and prevents loss of cardiolipin and cytochrome c release. The protein is Glutaredoxin-2, mitochondrial (GLRX2) of Homo sapiens (Human).